Here is a 294-residue protein sequence, read N- to C-terminus: tRNA-cytidine(32) 2-sulfurtransferase (294 aa).

The PP-loop motif signature appears at 70–75 (SGGKDS). The [4Fe-4S] cluster site is built by Cys145, Cys148, and Cys236.

Belongs to the TtcA family. As to quaternary structure, homodimer. The cofactor is Mg(2+). Requires [4Fe-4S] cluster as cofactor.

The protein resides in the cytoplasm. The catalysed reaction is cytidine(32) in tRNA + S-sulfanyl-L-cysteinyl-[cysteine desulfurase] + AH2 + ATP = 2-thiocytidine(32) in tRNA + L-cysteinyl-[cysteine desulfurase] + A + AMP + diphosphate + H(+). The protein operates within tRNA modification. In terms of biological role, catalyzes the ATP-dependent 2-thiolation of cytidine in position 32 of tRNA, to form 2-thiocytidine (s(2)C32). The sulfur atoms are provided by the cysteine/cysteine desulfurase (IscS) system. The sequence is that of tRNA-cytidine(32) 2-sulfurtransferase from Rhizobium meliloti (strain 1021) (Ensifer meliloti).